A 1677-amino-acid chain; its full sequence is ELMO domain-containing protein E (1677 aa).

Disordered stretches follow at residues 112-139 (TTTSSSSSSSSPSSSSSSSSSSSSSSPS), 168-194 (NSKDTNNSGTINNNNNNNNNSGGSNIK), 264-372 (QLHG…NTTE), 592-625 (DDDNDNNNNQELNNNNNNNNNNNYNIKTKPRSNS), 775-801 (PNSNNPTDNIITTNTNTTTTTTTSTNN), 888-947 (INKN…NQDI), 982-1002 (KIRSSSSTPDTSSPPLNSQPE), 1047-1075 (STNNHHIGGGGGGGSSDNLLSRSPEETRS), 1122-1141 (KQKSPKLQGGSGPWKKGNVS), 1197-1248 (NNNI…DNHA), 1261-1404 (DDDD…RKKR), 1434-1454 (SPGSYDAHLNNPHLSVSPQPE), 1467-1593 (KNPE…GDVS), and 1654-1677 (ESQRDLQHQASSSNLKFSLASSSK). Low complexity-rich tracts occupy residues 115-139 (SSSSSSSSPSSSSSSSSSSSSSSPS) and 172-194 (TNNSGTINNNNNNNNNSGGSNIK). A compositionally biased stretch (gly residues) spans 269-278 (SIGGGGGGSG). 3 stretches are compositionally biased toward low complexity: residues 307–334 (SQSNSPQSSSFVKSQQIQQQQQYQKPNN), 341–352 (TTTTTTTTTTTS), and 597–616 (NNNNQELNNNNNNNNNNNYN). An ELMO domain is found at 492 to 710 (SHQILLSDLW…HTREIIEKVC (219 aa)). A compositionally biased stretch (gly residues) spans 891-903 (NGGGGGGGGGGGV). Residues 922–933 (IDDSDDENDNDE) show a composition bias toward acidic residues. Composition is skewed to low complexity over residues 934 to 946 (VNNNNNSNRINQD) and 985 to 996 (SSSSTPDTSSPP). Residues 1186-1212 (LLDDVLDLNQTNNNIDNENDDINEAII) are a coiled coil. Positions 1228-1238 (EEEEEEEEEEE) are enriched in acidic residues. Low complexity predominate over residues 1285 to 1305 (NNTTTTTTTTTTTTTTTTNTT). Over residues 1306–1334 (GQKRISILSTDTNRPGSSNYGESSLSNGS) the composition is skewed to polar residues. A compositionally biased stretch (acidic residues) spans 1387 to 1397 (DDEDDEDDDDK). Over residues 1445–1454 (PHLSVSPQPE) the composition is skewed to polar residues. 3 stretches are compositionally biased toward low complexity: residues 1475 to 1488 (LSSSYDSSTSPLLS), 1503 to 1574 (SNLI…PSSS), and 1663 to 1677 (ASSSNLKFSLASSSK).

The chain is ELMO domain-containing protein E (elmoE) from Dictyostelium discoideum (Social amoeba).